The following is a 244-amino-acid chain: MEDAGEHLRCNDNVNDEERLPLEFMIGNSTSTAELQPPPPFLVKTYKVVEDPTTDGVISWNEYGTGFVVWQPAEFARDLLPTLFKHCNFSSFVRQLNTYGFRKVTTIRWEFSNEMFRKGQRELMSNIRRRKSQHWSHNKSNHQVVPTTTMVNQEGHQRIGIDHHHEDQQSSATSSSFVYTALLDENKCLKNENELLSCELGKTKKKCKQLMELVERYRGEDEDATDESDDEEDEGLKLFGVKLE.

The DNA-binding element occupies 38–132 (PPPFLVKTYK…LMSNIRRRKS (95 aa)). A hydrophobic repeat HR-A/B region spans residues 173–218 (TSSSFVYTALLDENKCLKNENELLSCELGKTKKKCKQLMELVERYR). The Nuclear localization signal motif lies at 202–208 (KTKKKCK). The segment at 216-244 (RYRGEDEDATDESDDEEDEGLKLFGVKLE) is disordered. Residues 220–234 (EDEDATDESDDEEDE) show a composition bias toward acidic residues. Positions 236–243 (LKLFGVKL) match the Nuclear export signal motif.

Belongs to the HSF family. Class B subfamily. Homotrimer. Exhibits temperature-dependent phosphorylation.

Its subcellular location is the cytoplasm. It localises to the nucleus. Transcriptional regulator that specifically binds DNA sequence 5'-AGAAnnTTCT-3' known as heat shock promoter elements (HSE). This is Heat stress transcription factor B-3 (HSFB3) from Arabidopsis thaliana (Mouse-ear cress).